The chain runs to 429 residues: 3-phosphoshikimate 1-carboxyvinyltransferase (429 aa).

The 3-phosphoshikimate site is built by Lys-23, Ser-24, and Arg-28. A phosphoenolpyruvate-binding site is contributed by Lys-23. Gly-95 and Arg-123 together coordinate phosphoenolpyruvate. Residues Ser-168, Gln-170, Asp-316, and Lys-343 each coordinate 3-phosphoshikimate. Gln-170 is a phosphoenolpyruvate binding site. Catalysis depends on Asp-316, which acts as the Proton acceptor. Arg-347 and Arg-389 together coordinate phosphoenolpyruvate.

Belongs to the EPSP synthase family. In terms of assembly, monomer.

It is found in the cytoplasm. It carries out the reaction 3-phosphoshikimate + phosphoenolpyruvate = 5-O-(1-carboxyvinyl)-3-phosphoshikimate + phosphate. Its pathway is metabolic intermediate biosynthesis; chorismate biosynthesis; chorismate from D-erythrose 4-phosphate and phosphoenolpyruvate: step 6/7. In terms of biological role, catalyzes the transfer of the enolpyruvyl moiety of phosphoenolpyruvate (PEP) to the 5-hydroxyl of shikimate-3-phosphate (S3P) to produce enolpyruvyl shikimate-3-phosphate and inorganic phosphate. The sequence is that of 3-phosphoshikimate 1-carboxyvinyltransferase from Bacillus cereus (strain ZK / E33L).